We begin with the raw amino-acid sequence, 92 residues long: Protamine-2 (92 aa).

Residues 1 to 76 (MVRCRVRSPS…RRACRHRRHR (76 aa)) form a disordered region. Residues 7 to 20 (RSPSESPQQGSGQQ) show a composition bias toward low complexity. Phosphoserine occurs at positions 8 and 10. Positions 21–36 (RENERQDQDQELRPED) are enriched in basic and acidic residues. The segment covering 42–76 (RTHRGRYHYRHRSHTRRRRSCRRRRRRACRHRRHR) has biased composition (basic residues).

Belongs to the protamine P2 family. In terms of assembly, interacts with TDRP. In terms of processing, proteolytic processing into mature chains is required for histone eviction during spermatogenesis. Transition proteins (TNP1 and TNP2) are required for processing. Testis.

The protein localises to the nucleus. It is found in the chromosome. Protamines substitute for histones in the chromatin of sperm during the haploid phase of spermatogenesis. They compact sperm DNA into a highly condensed, stable and inactive complex. This Sus scrofa (Pig) protein is Protamine-2 (PRM2).